Consider the following 965-residue polypeptide: Glycine dehydrogenase (decarboxylating) 1 (965 aa).

At Lys713 the chain carries N6-(pyridoxal phosphate)lysine.

The protein belongs to the GcvP family. The glycine cleavage system is composed of four proteins: P, T, L and H. Requires pyridoxal 5'-phosphate as cofactor.

It catalyses the reaction N(6)-[(R)-lipoyl]-L-lysyl-[glycine-cleavage complex H protein] + glycine + H(+) = N(6)-[(R)-S(8)-aminomethyldihydrolipoyl]-L-lysyl-[glycine-cleavage complex H protein] + CO2. The glycine cleavage system catalyzes the degradation of glycine. The P protein binds the alpha-amino group of glycine through its pyridoxal phosphate cofactor; CO(2) is released and the remaining methylamine moiety is then transferred to the lipoamide cofactor of the H protein. The sequence is that of Glycine dehydrogenase (decarboxylating) 1 from Colwellia psychrerythraea (strain 34H / ATCC BAA-681) (Vibrio psychroerythus).